A 236-amino-acid polypeptide reads, in one-letter code: Ribose-5-phosphate isomerase A (236 aa).

Substrate contacts are provided by residues 33-36 (TGST), 90-93 (DGAD), and 103-106 (KGGG). E112 functions as the Proton acceptor in the catalytic mechanism. Residue K130 coordinates substrate.

Belongs to the ribose 5-phosphate isomerase family. Homodimer.

It catalyses the reaction aldehydo-D-ribose 5-phosphate = D-ribulose 5-phosphate. It functions in the pathway carbohydrate degradation; pentose phosphate pathway; D-ribose 5-phosphate from D-ribulose 5-phosphate (non-oxidative stage): step 1/1. Functionally, catalyzes the reversible conversion of ribose-5-phosphate to ribulose 5-phosphate. This is Ribose-5-phosphate isomerase A from Nostoc sp. (strain PCC 7120 / SAG 25.82 / UTEX 2576).